The primary structure comprises 256 residues: Imidazole glycerol phosphate synthase subunit HisF (256 aa).

Residues Asp-11 and Asp-130 contribute to the active site.

This sequence belongs to the HisA/HisF family. Heterodimer of HisH and HisF.

It is found in the cytoplasm. The catalysed reaction is 5-[(5-phospho-1-deoxy-D-ribulos-1-ylimino)methylamino]-1-(5-phospho-beta-D-ribosyl)imidazole-4-carboxamide + L-glutamine = D-erythro-1-(imidazol-4-yl)glycerol 3-phosphate + 5-amino-1-(5-phospho-beta-D-ribosyl)imidazole-4-carboxamide + L-glutamate + H(+). It participates in amino-acid biosynthesis; L-histidine biosynthesis; L-histidine from 5-phospho-alpha-D-ribose 1-diphosphate: step 5/9. Its function is as follows. IGPS catalyzes the conversion of PRFAR and glutamine to IGP, AICAR and glutamate. The HisF subunit catalyzes the cyclization activity that produces IGP and AICAR from PRFAR using the ammonia provided by the HisH subunit. The chain is Imidazole glycerol phosphate synthase subunit HisF from Prochlorococcus marinus (strain MIT 9312).